We begin with the raw amino-acid sequence, 492 residues long: Catalase isozyme 2 (492 aa).

Active-site residues include His65 and Asn138. Position 348 (Tyr348) interacts with heme.

It belongs to the catalase family. As to quaternary structure, homotetramer. Heme serves as cofactor.

Its subcellular location is the peroxisome. The enzyme catalyses 2 H2O2 = O2 + 2 H2O. Occurs in almost all aerobically respiring organisms and serves to protect cells from the toxic effects of hydrogen peroxide. This chain is Catalase isozyme 2 (CAT2), found in Solanum lycopersicum (Tomato).